The primary structure comprises 505 residues: Glucose-6-phosphate 1-dehydrogenase (505 aa).

Serine 2 carries the N-acetylserine modification. NADP(+)-binding positions include 18–25 and arginine 52; that span reads GASGDLAK. The residue at position 142 (serine 142) is a Phosphoserine. Tyrosine 145 is modified (phosphotyrosine). Lysine 157 is a binding site for NADP(+). Residues lysine 157, 187-191, glutamate 225, and aspartate 244 contribute to the D-glucose 6-phosphate site; that span reads HYLGK. Histidine 249 functions as the Proton acceptor in the catalytic mechanism. Residue arginine 340 participates in NADP(+) binding. Position 343 (lysine 343) interacts with D-glucose 6-phosphate. Lysine 349, arginine 353, and arginine 375 together coordinate NADP(+). Glutamine 377 is a D-glucose 6-phosphate binding site. NADP(+) contacts are provided by residues 383–385 and arginine 470; that span reads YLK.

Belongs to the glucose-6-phosphate dehydrogenase family.

It carries out the reaction D-glucose 6-phosphate + NADP(+) = 6-phospho-D-glucono-1,5-lactone + NADPH + H(+). Its pathway is carbohydrate degradation; pentose phosphate pathway; D-ribulose 5-phosphate from D-glucose 6-phosphate (oxidative stage): step 1/3. Functionally, catalyzes the rate-limiting step of the oxidative pentose-phosphate pathway, which represents a route for the dissimilation of carbohydrates besides glycolysis. The main function of this enzyme is to provide reducing power (NADPH) and pentose phosphates for fatty acid and nucleic acid synthesis. This Saccharomyces cerevisiae (strain ATCC 204508 / S288c) (Baker's yeast) protein is Glucose-6-phosphate 1-dehydrogenase (ZWF1).